The chain runs to 83 residues: ATP synthase subunit c, chloroplastic (83 aa).

Transmembrane regions (helical) follow at residues 3–23 and 57–77; these read PLIAASSVIAAGLAIGLAAIG and FAFMESLTIYGLVVALALLFA.

The protein belongs to the ATPase C chain family. In terms of assembly, F-type ATPases have 2 components, F(1) - the catalytic core - and F(0) - the membrane proton channel. F(1) has five subunits: alpha(3), beta(3), gamma(1), delta(1), epsilon(1). F(0) has four main subunits: a(1), b(1), b'(1) and c(10-14). The alpha and beta chains form an alternating ring which encloses part of the gamma chain. F(1) is attached to F(0) by a central stalk formed by the gamma and epsilon chains, while a peripheral stalk is formed by the delta, b and b' chains.

It is found in the plastid. The protein resides in the chloroplast thylakoid membrane. F(1)F(0) ATP synthase produces ATP from ADP in the presence of a proton or sodium gradient. F-type ATPases consist of two structural domains, F(1) containing the extramembraneous catalytic core and F(0) containing the membrane proton channel, linked together by a central stalk and a peripheral stalk. During catalysis, ATP synthesis in the catalytic domain of F(1) is coupled via a rotary mechanism of the central stalk subunits to proton translocation. In terms of biological role, key component of the F(0) channel; it plays a direct role in translocation across the membrane. A homomeric c-ring of between 10-14 subunits forms the central stalk rotor element with the F(1) delta and epsilon subunits. In Oedogonium cardiacum (Filamentous green alga), this protein is ATP synthase subunit c, chloroplastic.